The chain runs to 348 residues: Succinylglutamate desuccinylase (348 aa).

3 residues coordinate Zn(2+): His67, Glu70, and His164. Glu228 is a catalytic residue.

This sequence belongs to the AspA/AstE family. Succinylglutamate desuccinylase subfamily. Zn(2+) serves as cofactor.

The catalysed reaction is N-succinyl-L-glutamate + H2O = L-glutamate + succinate. The protein operates within amino-acid degradation; L-arginine degradation via AST pathway; L-glutamate and succinate from L-arginine: step 5/5. In terms of biological role, transforms N(2)-succinylglutamate into succinate and glutamate. The sequence is that of Succinylglutamate desuccinylase from Shewanella denitrificans (strain OS217 / ATCC BAA-1090 / DSM 15013).